Consider the following 99-residue polypeptide: Putative RNA-binding protein RbpE (99 aa).

Residues 2–79 (SIYVGNLSYS…RVLKVNKARP (78 aa)) form the RRM domain. The disordered stretch occupies residues 78 to 99 (RPREEKGARSGGGSWSRNNGGY). Gly residues predominate over residues 86-99 (RSGGGSWSRNNGGY).

This chain is Putative RNA-binding protein RbpE (rbpE), found in Nostoc sp. (strain PCC 7120 / SAG 25.82 / UTEX 2576).